The sequence spans 383 residues: MKLTSIPIASTLLSLLAASGTLASPLHKRDDPLNNKQFGLMSIHSGNSYVHLHPFYVGDSGAIYLDPTDGTSTSAVFSMSNGRLVVGNLYASVDSNGTTIFKSDANAASTKFSAGDATNVGYNLLYNGTQSAVACPASDNDQVYQVYFGAGNGNPNCAGIAIEAFVSPSSSSSSSSSAATSTSTRVSSSAKASTSSGAIAYTTKCVVVPVTASATATAKAASAAASSAVYPLFPHGIRLIDSANPSSNSGNVYSPVVFQKQNNHTNTIFTFDVPQVSGSCELNLHLDTSGFPITVEGSNGVGQFILFNLSSVANDSTVYSNRPNRIAEIGRFNCSSSGCDYATNVTCPNSYTAVSYEMMALTDDSYLSFFEEADPLEGLTLRV.

Positions Met1–Ala23 are cleaved as a signal peptide.

Belongs to the but2 family.

Its subcellular location is the cytoplasm. It is found in the nucleus. This is an uncharacterized protein from Schizosaccharomyces pombe (strain 972 / ATCC 24843) (Fission yeast).